The following is a 1873-amino-acid chain: Replicase polyprotein 1a (1873 aa).

Catalysis depends on for leader protease activity residues Cys-344 and His-393. The Alphavirus-like MT domain occupies 495–674 (SFNQKSYSNH…HSCQTLKDIL (180 aa)). The interval 1356-1381 (VMPPLEEVETPKRSVGRPSSKQDDIE) is disordered. Positions 1538–1705 (RGMYSNERCR…FFRKQDLNYD (168 aa)) constitute a (+)RNA virus helicase ATP-binding domain. Residues 1706–1873 (TYTYRCPLDT…LKDYHFRQCL (168 aa)) enclose the (+)RNA virus helicase C-terminal domain.

The catalysed reaction is ATP + H2O = ADP + phosphate + H(+). The sequence is that of Replicase polyprotein 1a from Beta vulgaris (Sugar beet).